We begin with the raw amino-acid sequence, 285 residues long: NADPH-dependent 7-cyano-7-deazaguanine reductase (285 aa).

91 to 93 serves as a coordination point for substrate; the sequence is IES. 93–94 contributes to the NADPH binding site; sequence SK. The active-site Thioimide intermediate is the cysteine 191. Aspartate 198 acts as the Proton donor in catalysis. 230 to 231 is a substrate binding site; it reads HE. 259–260 lines the NADPH pocket; it reads RG.

This sequence belongs to the GTP cyclohydrolase I family. QueF type 2 subfamily. Homodimer.

Its subcellular location is the cytoplasm. It carries out the reaction 7-aminomethyl-7-carbaguanine + 2 NADP(+) = 7-cyano-7-deazaguanine + 2 NADPH + 3 H(+). Its pathway is tRNA modification; tRNA-queuosine biosynthesis. Catalyzes the NADPH-dependent reduction of 7-cyano-7-deazaguanine (preQ0) to 7-aminomethyl-7-deazaguanine (preQ1). This chain is NADPH-dependent 7-cyano-7-deazaguanine reductase, found in Legionella pneumophila (strain Corby).